The following is a 404-amino-acid chain: Alkane 1-monooxygenase 1 (404 aa).

A run of 4 helical transmembrane segments spans residues 25 to 45 (HLWI…YLVS), 47 to 67 (TGWS…VPLI), 94 to 114 (VLTY…AWWV), and 119 to 139 (IGVF…GLAL). 2 residues coordinate Fe cation: histidine 143 and histidine 147. Residues 151–171 (TFDRWMAKLVLAVVGYGHFFI) traverse the membrane as a helical segment. Fe cation-binding residues include histidine 173, histidine 177, and histidine 178. The chain crosses the membrane as a helical span at residues 241–261 (VVLYAALLAFFGPLMLIFLPI). Residues histidine 317, histidine 320, and histidine 321 each coordinate Fe cation.

This sequence belongs to the fatty acid desaturase type 1 family. AlkB subfamily. Fe(3+) serves as cofactor.

The protein localises to the cell inner membrane. The enzyme catalyses octane + 2 reduced [rubredoxin] + O2 + 2 H(+) = 2 oxidized [rubredoxin] + octan-1-ol + H2O. It functions in the pathway hydrocarbon metabolism; alkane degradation. In terms of biological role, catalyzes the hydroxylation of n-alkanes and fatty acids in the presence of a NADH-rubredoxin reductase and rubredoxin. It preferably hydroxylases C5-C12 hydrocarbons. The polypeptide is Alkane 1-monooxygenase 1 (alkB1) (Alcanivorax borkumensis (strain ATCC 700651 / DSM 11573 / NCIMB 13689 / SK2)).